Reading from the N-terminus, the 312-residue chain is Acetyl-coenzyme A carboxylase carboxyl transferase subunit alpha (312 aa).

The region spanning 36 to 286 is the CoA carboxyltransferase C-terminal domain; the sequence is NLEKEISKTY…ADYVKKSLNE (251 aa).

It belongs to the AccA family. Acetyl-CoA carboxylase is a heterohexamer composed of biotin carboxyl carrier protein (AccB), biotin carboxylase (AccC) and two subunits each of ACCase subunit alpha (AccA) and ACCase subunit beta (AccD).

The protein resides in the cytoplasm. The catalysed reaction is N(6)-carboxybiotinyl-L-lysyl-[protein] + acetyl-CoA = N(6)-biotinyl-L-lysyl-[protein] + malonyl-CoA. The protein operates within lipid metabolism; malonyl-CoA biosynthesis; malonyl-CoA from acetyl-CoA: step 1/1. In terms of biological role, component of the acetyl coenzyme A carboxylase (ACC) complex. First, biotin carboxylase catalyzes the carboxylation of biotin on its carrier protein (BCCP) and then the CO(2) group is transferred by the carboxyltransferase to acetyl-CoA to form malonyl-CoA. The protein is Acetyl-coenzyme A carboxylase carboxyl transferase subunit alpha of Campylobacter jejuni subsp. jejuni serotype O:6 (strain 81116 / NCTC 11828).